Reading from the N-terminus, the 521-residue chain is Exodeoxyribonuclease 7 large subunit (521 aa).

The disordered stretch occupies residues 494–521 (ATSGAARPKPAAKPSTKAKEPGNQGSLF). Low complexity predominate over residues 498–508 (AARPKPAAKPS).

It belongs to the XseA family. In terms of assembly, heterooligomer composed of large and small subunits.

The protein localises to the cytoplasm. The enzyme catalyses Exonucleolytic cleavage in either 5'- to 3'- or 3'- to 5'-direction to yield nucleoside 5'-phosphates.. In terms of biological role, bidirectionally degrades single-stranded DNA into large acid-insoluble oligonucleotides, which are then degraded further into small acid-soluble oligonucleotides. This chain is Exodeoxyribonuclease 7 large subunit, found in Mesorhizobium japonicum (strain LMG 29417 / CECT 9101 / MAFF 303099) (Mesorhizobium loti (strain MAFF 303099)).